Here is a 472-residue protein sequence, read N- to C-terminus: ATP synthase subunit beta (472 aa).

Residue 157 to 164 (GGAGVGKT) participates in ATP binding.

It belongs to the ATPase alpha/beta chains family. In terms of assembly, F-type ATPases have 2 components, CF(1) - the catalytic core - and CF(0) - the membrane proton channel. CF(1) has five subunits: alpha(3), beta(3), gamma(1), delta(1), epsilon(1). CF(0) has three main subunits: a(1), b(2) and c(9-12). The alpha and beta chains form an alternating ring which encloses part of the gamma chain. CF(1) is attached to CF(0) by a central stalk formed by the gamma and epsilon chains, while a peripheral stalk is formed by the delta and b chains.

It is found in the cell membrane. It catalyses the reaction ATP + H2O + 4 H(+)(in) = ADP + phosphate + 5 H(+)(out). In terms of biological role, produces ATP from ADP in the presence of a proton gradient across the membrane. The catalytic sites are hosted primarily by the beta subunits. This is ATP synthase subunit beta from Desulforamulus reducens (strain ATCC BAA-1160 / DSM 100696 / MI-1) (Desulfotomaculum reducens).